The primary structure comprises 202 residues: Small ribosomal subunit protein uS4c (202 aa).

An S4 RNA-binding domain is found at 90-153; the sequence is MRLDNVIFRL…KSEAIISKNI (64 aa).

It belongs to the universal ribosomal protein uS4 family. In terms of assembly, part of the 30S ribosomal subunit. Contacts protein S5. The interaction surface between S4 and S5 is involved in control of translational fidelity.

Its subcellular location is the plastid. It localises to the chloroplast. Functionally, one of the primary rRNA binding proteins, it binds directly to 16S rRNA where it nucleates assembly of the body of the 30S subunit. In terms of biological role, with S5 and S12 plays an important role in translational accuracy. This chain is Small ribosomal subunit protein uS4c (rps4), found in Hypopterygium didictyon.